Here is a 150-residue protein sequence, read N- to C-terminus: Transcriptional repressor NrdR (150 aa).

The segment at 3–34 (CPFCAFADSKVVDSRPDKEGSTIRRRRECESC) is a zinc-finger region. The region spanning 49–139 (PLVIKKDGRR…VYRSFKDITE (91 aa)) is the ATP-cone domain.

This sequence belongs to the NrdR family. It depends on Zn(2+) as a cofactor.

Negatively regulates transcription of bacterial ribonucleotide reductase nrd genes and operons by binding to NrdR-boxes. The protein is Transcriptional repressor NrdR of Geotalea daltonii (strain DSM 22248 / JCM 15807 / FRC-32) (Geobacter daltonii).